The primary structure comprises 160 residues: Allophycocyanin alpha chain (160 aa).

Asparagine 70 is subject to N4-methylasparagine. Cysteine 80 lines the (2R,3E)-phycocyanobilin pocket.

The protein belongs to the phycobiliprotein family. Component of the phycobilisome. Heterodimer of an alpha and a beta chain. Post-translationally, contains one covalently linked phycocyanobilin chromophore.

Its subcellular location is the cellular thylakoid membrane. In terms of biological role, light-harvesting photosynthetic bile pigment-protein from the phycobiliprotein complex. Allophycocyanin has a maximum absorption at approximately 650 nanometers. The chain is Allophycocyanin alpha chain (apcA) from Mastigocladus laminosus (Fischerella sp.).